Consider the following 86-residue polypeptide: Anti-adapter protein IraP (86 aa).

A coiled-coil region spans residues 1 to 36; that stretch reads MKNLIAELLFKLAQKEEESKELCAQVEALEIIVTAM.

The protein belongs to the IraP family. In terms of assembly, interacts with RssB.

It localises to the cytoplasm. Functionally, inhibits RpoS proteolysis by regulating RssB activity, thereby increasing the stability of the sigma stress factor RpoS especially during phosphate starvation, but also in stationary phase and during nitrogen starvation. Its effect on RpoS stability is due to its interaction with RssB, which probably blocks the interaction of RssB with RpoS, and the consequent delivery of the RssB-RpoS complex to the ClpXP protein degradation pathway. The chain is Anti-adapter protein IraP from Shigella sonnei (strain Ss046).